Consider the following 433-residue polypeptide: Probable beta-1,3-galactosyl-O-glycosyl-glycoprotein beta-1,6-N-acetylglucosaminyltransferase 7 (433 aa).

Topologically, residues 1–8 (MSQLRTTK) are cytoplasmic. A helical; Signal-anchor for type II membrane protein membrane pass occupies residues 9 to 25 (AGLVACGMICAFIFLYL). Topologically, residues 26 to 433 (RNPGPEEAEA…QSHFNSQPHH (408 aa)) are extracellular. 4 disulfides stabilise this stretch: C57–C209, C143–C358, C164–C191, and C367–C398. N-linked (GlcNAc...) asparagine glycosylation occurs at N112. A disordered region spans residues 233-275 (NITPGVTPPANSKPKTGQGPPKPSPDENSYTAPNTIFKQSPPH). The span at 258-275 (DENSYTAPNTIFKQSPPH) shows a compositional bias: polar residues. Residues 413 to 433 (VPPEPHWQFPQQSHFNSQPHH) form a disordered region. Positions 421-433 (FPQQSHFNSQPHH) are enriched in polar residues.

Belongs to the glycosyltransferase 14 family.

It localises to the golgi apparatus membrane. It functions in the pathway protein modification; protein glycosylation. Its function is as follows. Probable glycosyltransferase. This Mus musculus (Mouse) protein is Probable beta-1,3-galactosyl-O-glycosyl-glycoprotein beta-1,6-N-acetylglucosaminyltransferase 7.